The sequence spans 617 residues: Zinc finger protein 221 (617 aa).

The KRAB domain maps to 30–100 (VTFKDVAVVF…KTTSQREGNS (71 aa)). 3 C2H2-type zinc fingers span residues 170–192 (YRCNECKQSFSDVSVFDLHQQSH), 198–220 (HTCGECGKSFCYSPALHIHQRVH), and 226–248 (YKCDVCGKEFNQSSHLQTHQRVH). The C2H2-type 4; degenerate zinc finger occupies 254 to 276 (FKCGQCGKGFHSRSALNVHCKLH). C2H2-type zinc fingers lie at residues 282–304 (YNCEECGKAFIHDSQLQEHQRIH), 310–332 (FKCDICGKSFRVRSRLNRHSMVH), 338–360 (FRCDTCGKNFRQRSALNSHSMVH), 366–388 (YKCEQCGKGFICRRDFCKHQMVH), 394–416 (YNCKECGKTFRWSSCLLNHQQVH), 422–444 (FKCEECGKGFYTNSRRSSHQRSH), 450–472 (YNCEECGKDYKRRLDLEFHQRVH), 478–500 (YNCKECGKSFGWASCLLKHQRLH), 506–528 (FKCEECGKRFTQSSQLHSHQTCH), 534–556 (YKCEQCEKGYNSKFNLDMHQRVH), and 562–584 (YNCKECGKSFGWASCLLKHQRLH).

The protein belongs to the krueppel C2H2-type zinc-finger protein family.

The protein resides in the nucleus. Functionally, may be involved in transcriptional regulation. This Homo sapiens (Human) protein is Zinc finger protein 221 (ZNF221).